Consider the following 145-residue polypeptide: Peptide methionine sulfoxide reductase MsrB (145 aa).

The 124-residue stretch at 4–127 (SDELKQRIGE…NSAALKFIPY (124 aa)) folds into the MsrB domain. Cys116 (nucleophile) is an active-site residue.

It belongs to the MsrB Met sulfoxide reductase family.

It carries out the reaction L-methionyl-[protein] + [thioredoxin]-disulfide + H2O = L-methionyl-(R)-S-oxide-[protein] + [thioredoxin]-dithiol. In Streptococcus pyogenes serotype M3 (strain ATCC BAA-595 / MGAS315), this protein is Peptide methionine sulfoxide reductase MsrB.